The sequence spans 206 residues: N-(5'-phosphoribosyl)anthranilate isomerase (206 aa).

This sequence belongs to the TrpF family.

The enzyme catalyses N-(5-phospho-beta-D-ribosyl)anthranilate = 1-(2-carboxyphenylamino)-1-deoxy-D-ribulose 5-phosphate. It participates in amino-acid biosynthesis; L-tryptophan biosynthesis; L-tryptophan from chorismate: step 3/5. This Chlamydia felis (strain Fe/C-56) (Chlamydophila felis) protein is N-(5'-phosphoribosyl)anthranilate isomerase.